A 506-amino-acid polypeptide reads, in one-letter code: UPF0522 protein A (506 aa).

The first 18 residues, 1–18, serve as a signal peptide directing secretion; sequence MIKSLLLLISIIIGIVIS. N-linked (GlcNAc...) asparagine glycans are attached at residues Asn145, Asn155, Asn330, Asn366, Asn418, and Asn427.

Belongs to the UPF0522 family.

The protein localises to the secreted. This chain is UPF0522 protein A, found in Dictyostelium discoideum (Social amoeba).